Consider the following 140-residue polypeptide: Protein E6 (140 aa).

2 zinc fingers span residues 27-63 (CIFCSHTVDLQDLASFYLKKLSLVFRGGCYYACCSEC) and 100-136 (CICCLRLLDIVEKLDLLYSDQACYLIRGLWRGYCRNC).

This sequence belongs to the papillomaviridae E6 protein family. As to quaternary structure, forms homodimers. Interacts with ubiquitin-protein ligase UBE3A/E6-AP; this interaction stimulates UBE3A ubiquitin activity. Interacts with host BAK1.

Its subcellular location is the host cytoplasm. The protein resides in the host nucleus. In terms of biological role, plays a major role in the induction and maintenance of cellular transformation. E6 associates with host UBE3A/E6-AP ubiquitin-protein ligase and modulates its activity. Protects host keratinocytes from apoptosis by mediating the degradation of host BAK1. May also inhibit host immune response. The polypeptide is Protein E6 (Human papillomavirus 65).